The sequence spans 1020 residues: Probable leucine-rich repeat receptor-like serine/threonine-protein kinase At3g14840 (1020 aa).

Positions 1–26 (MSLNRQLLFTYYFIVSLILFSDFVSS) are cleaved as a signal peptide. Residues 27–614 (ATLPKEEVDA…GTGGGSSVGT (588 aa)) are Extracellular-facing. N-linked (GlcNAc...) asparagine glycans are attached at residues Asn-50 and Asn-81. LRR repeat units follow at residues 86–110 (ICHV…LSGL), 111–134 (PFLQ…WGAS), 136–157 (LLNI…LGNL), 158–181 (TTLS…LGNL), 182–204 (PNLK…TFAK), 206–231 (TTLT…NWKG), 253–276 (LGTL…PLRN), 277–301 (MTSM…LGQN), 302–324 (RKLK…TYSG), and 326–349 (SDVD…MVDQ). N-linked (GlcNAc...) asparagine glycans are attached at residues Asn-124, Asn-138, and Asn-156. Residue Asn-193 is glycosylated (N-linked (GlcNAc...) asparagine). 2 N-linked (GlcNAc...) asparagine glycosylation sites follow: Asn-276 and Asn-289. Asn-359, Asn-386, Asn-389, Asn-417, Asn-461, Asn-469, and Asn-498 each carry an N-linked (GlcNAc...) asparagine glycan. Residues 479-501 (QARLSAISLTYQALCLGKGNYTV) form an LRR 11 repeat. Residues 615–635 (VVGSVIASTVFLVLLIGGILW) form a helical membrane-spanning segment. Topologically, residues 636–1020 (WRGCLRPKSQ…LDSAYWNTRT (385 aa)) are cytoplasmic. The Protein kinase domain occupies 672–949 (FDPANKIGEG…VSMLEGHSTV (278 aa)). Residues 678-686 (IGEGGFGPV) and Lys-700 contribute to the ATP site. Phosphotyrosine is present on Tyr-745. The active-site Proton acceptor is the Asp-798. A Phosphoserine modification is found at Ser-831. 2 positions are modified to phosphothreonine: Thr-832 and Thr-837. Tyr-845 carries the post-translational modification Phosphotyrosine.

It belongs to the protein kinase superfamily. Ser/Thr protein kinase family.

It is found in the cell membrane. It carries out the reaction L-seryl-[protein] + ATP = O-phospho-L-seryl-[protein] + ADP + H(+). It catalyses the reaction L-threonyl-[protein] + ATP = O-phospho-L-threonyl-[protein] + ADP + H(+). The polypeptide is Probable leucine-rich repeat receptor-like serine/threonine-protein kinase At3g14840 (LRR-RLK) (Arabidopsis thaliana (Mouse-ear cress)).